We begin with the raw amino-acid sequence, 330 residues long: Polyprenal reductase (330 aa).

Topologically, residues 1-19 are cytoplasmic; it reads MASWVGTELSALNPLRTLW. Residues 20–40 traverse the membrane as a helical segment; sequence LALAAAFLLALLLQLAPAGLL. Over 41 to 74 the chain is Lumenal; it reads PNCALFQDLIRYGKTKLSGPRRPAVCRAFDVPKR. Residues 75 to 95 form a helical membrane-spanning segment; it reads YFSHFYVVSVLWNGFLLWFLS. Residues 96-132 lie on the Cytoplasmic side of the membrane; the sequence is RSLFLGAPFPNWLRALLRTLGSTQFRALEMESKASQM. A helical membrane pass occupies residues 133-153; that stretch reads LVGELALSAFLVLVFLWVHSV. The Lumenal segment spans residues 154–168; it reads RRLFECFYISVFSNA. Residues 169–189 form a helical membrane-spanning segment; the sequence is VMHVVQYCFGLVYYVLVGLTV. Topologically, residues 190-206 are cytoplasmic; it reads LSQVPMDDKNVYMLGKN. Residues 207-227 form a helical membrane-spanning segment; sequence LLLPARWFHVLGMMMFLWSSA. The Lumenal segment spans residues 228–277; the sequence is HQYECHVILSNLRRNKKGAIVHCQHRIPFGDWFEYVSSANYLAELMIYIS. Residues 278–298 form a helical membrane-spanning segment; it reads MAVTFGFHNFTWWLVVAYVFF. Topologically, residues 299 to 330 are cytoplasmic; sequence CQALSAFFNHKFYKSTFVSYPKHRKAFLPFLF.

This sequence belongs to the steroid 5-alpha reductase family. Polyprenal reductase subfamily.

The protein resides in the endoplasmic reticulum membrane. It carries out the reaction a di-trans,poly-cis-dolichal + NADP(+) = a di-trans,poly-cis-polyprenal + NADPH + H(+). It catalyses the reaction a 3-oxo-5alpha-steroid + NADP(+) = a 3-oxo-Delta(4)-steroid + NADPH + H(+). The enzyme catalyses androst-4-ene-3,17-dione + NADPH + H(+) = 5alpha-androstan-3,17-dione + NADP(+). The catalysed reaction is 17beta-hydroxy-5alpha-androstan-3-one + NADP(+) = testosterone + NADPH + H(+). It participates in protein modification; protein glycosylation. In terms of biological role, plays a key role in early steps of protein N-linked glycosylation by being involved in the conversion of polyprenol into dolichol. Acts as a polyprenal reductase that mediates the reduction of polyprenal into dolichal in a NADP-dependent mechanism. Dolichols are required for the synthesis of dolichol-linked monosaccharides and the oligosaccharide precursor used for N-glycosylation. Also able to convert testosterone (T) into 5-alpha-dihydrotestosterone (DHT). The protein is Polyprenal reductase of Mesocricetus auratus (Golden hamster).